The primary structure comprises 127 residues: V-type proton ATPase subunit F (127 aa).

It belongs to the V-ATPase F subunit family. In terms of assembly, V-ATPase is a heteromultimeric enzyme made up of two complexes: the ATP-hydrolytic V1 complex and the proton translocation V0 complex. The V1 complex consists of three catalytic AB heterodimers that form a heterohexamer, three peripheral stalks each consisting of EG heterodimers, one central rotor including subunits D and F, and the regulatory subunits C and H. The proton translocation complex V0 consists of the proton transport subunit a, a ring of proteolipid subunits c9c'', rotary subunit d, subunits e and f, and the accessory subunits VhaAC45 and ATP6AP2.

Functionally, subunit of the V1 complex of vacuolar(H+)-ATPase (V-ATPase), a multisubunit enzyme composed of a peripheral complex (V1) that hydrolyzes ATP and a membrane integral complex (V0) that translocates protons. V-ATPase is responsible for acidifying and maintaining the pH of intracellular compartments and in some cell types, is targeted to the plasma membrane, where it is responsible for acidifying the extracellular environment. The protein is V-type proton ATPase subunit F (Vha14) of Anopheles gambiae (African malaria mosquito).